A 121-amino-acid polypeptide reads, in one-letter code: Small ribosomal subunit protein eS24 (121 aa).

This sequence belongs to the eukaryotic ribosomal protein eS24 family.

The polypeptide is Small ribosomal subunit protein eS24 (Pyrobaculum aerophilum (strain ATCC 51768 / DSM 7523 / JCM 9630 / CIP 104966 / NBRC 100827 / IM2)).